We begin with the raw amino-acid sequence, 589 residues long: Probable methyltransferase PMT23 (589 aa).

At 1–4 (MAIS) the chain is on the cytoplasmic side. Residues 5 to 25 (VQHVVVLLLSTLLIAITFFLF) form a helical; Signal-anchor for type II membrane protein membrane-spanning segment. The Lumenal segment spans residues 26–589 (TSDNARFPFP…FWRPAKPELR (564 aa)). 3 N-linked (GlcNAc...) asparagine glycosylation sites follow: N70, N375, and N442.

It belongs to the methyltransferase superfamily.

It is found in the golgi apparatus membrane. The protein is Probable methyltransferase PMT23 of Arabidopsis thaliana (Mouse-ear cress).